The primary structure comprises 610 residues: Elongation factor 4 (610 aa).

Positions 7 to 189 (SRIRNFSIIA…AIVQRIPPPK (183 aa)) constitute a tr-type G domain. GTP contacts are provided by residues 19-24 (DHGKST) and 136-139 (NKID).

The protein belongs to the TRAFAC class translation factor GTPase superfamily. Classic translation factor GTPase family. LepA subfamily.

It is found in the cell inner membrane. The enzyme catalyses GTP + H2O = GDP + phosphate + H(+). Its function is as follows. Required for accurate and efficient protein synthesis under certain stress conditions. May act as a fidelity factor of the translation reaction, by catalyzing a one-codon backward translocation of tRNAs on improperly translocated ribosomes. Back-translocation proceeds from a post-translocation (POST) complex to a pre-translocation (PRE) complex, thus giving elongation factor G a second chance to translocate the tRNAs correctly. Binds to ribosomes in a GTP-dependent manner. In Thermus thermophilus (strain ATCC 27634 / DSM 579 / HB8), this protein is Elongation factor 4.